Consider the following 299-residue polypeptide: Putative S-adenosyl-L-methionine-dependent methyltransferase MAB_0027c (299 aa).

S-adenosyl-L-methionine contacts are provided by residues Asp126 and 155-156 (DL).

This sequence belongs to the UPF0677 family.

Its function is as follows. Exhibits S-adenosyl-L-methionine-dependent methyltransferase activity. The polypeptide is Putative S-adenosyl-L-methionine-dependent methyltransferase MAB_0027c (Mycobacteroides abscessus (strain ATCC 19977 / DSM 44196 / CCUG 20993 / CIP 104536 / JCM 13569 / NCTC 13031 / TMC 1543 / L948) (Mycobacterium abscessus)).